The following is a 262-amino-acid chain: Granzyme A (262 aa).

The N-terminal stretch at 1 to 26 (MRNSYRFLASSLSVVVSLLLIPEDVC) is a signal peptide. Positions 27 to 28 (EK) are cleaved as a propeptide — activation peptide. The Peptidase S1 domain maps to 29–259 (IIGGNEVTPH…HLNWIIMTIK (231 aa)). Cysteine 54 and cysteine 70 are joined by a disulfide. Catalysis depends on charge relay system residues histidine 69 and aspartate 114. 3 disulfides stabilise this stretch: cysteine 148–cysteine 218, cysteine 179–cysteine 197, and cysteine 208–cysteine 234. A glycan (N-linked (GlcNAc...) asparagine) is linked at asparagine 170. The active-site Charge relay system is serine 212.

Belongs to the peptidase S1 family. Granzyme subfamily. In terms of assembly, homodimer; disulfide-linked. Interacts with APEX1.

Its subcellular location is the secreted. The protein localises to the cytoplasmic granule. It carries out the reaction Hydrolysis of proteins, including fibronectin, type IV collagen and nucleolin. Preferential cleavage: -Arg-|-Xaa-, -Lys-|-Xaa- &gt;&gt; -Phe-|-Xaa- in small molecule substrates.. Abundant protease in the cytosolic granules of cytotoxic T-cells and NK-cells which activates caspase-independent pyroptosis when delivered into the target cell through the immunological synapse. It cleaves after Lys or Arg. Once delivered into the target cell, acts by catalyzing cleavage of gasdermin-B (GSDMB), releasing the pore-forming moiety of GSDMB, thereby triggering pyroptosis and target cell death. Cleaves APEX1 after 'Lys-31' and destroys its oxidative repair activity. Cleaves the nucleosome assembly protein SET after 'Lys-189', which disrupts its nucleosome assembly activity and allows the SET complex to translocate into the nucleus to nick and degrade the DNA. This Homo sapiens (Human) protein is Granzyme A.